Reading from the N-terminus, the 262-residue chain is Steroid 5-alpha-reductase DET2 (262 aa).

A run of 6 helical transmembrane segments spans residues 13 to 33 (CLLT…FLQA), 51 to 71 (IAWF…FPFG), 79 to 99 (SLLL…IYPL), 113 to 133 (FPIT…YIQA), 148 to 168 (WFWW…YINI), and 205 to 225 (AIEW…GFFL).

This sequence belongs to the steroid 5-alpha reductase family.

The protein localises to the membrane. The catalysed reaction is a 3-oxo-5alpha-steroid + NADP(+) = a 3-oxo-Delta(4)-steroid + NADPH + H(+). It carries out the reaction 5alpha-campestan-3-one + NADP(+) = campest-4-en-3-one + NADPH + H(+). It catalyses the reaction (22S,24R)-22-hydroxy-5alpha-ergostan-3-one + NADP(+) = (22S)-22-hydroxycampest-4-en-3-one + NADPH + H(+). The enzyme catalyses 3-dehydro-6-deoxoteasterone + NADP(+) = (22R,23R)-22,23-dihydroxycampest-4-en-3-one + NADPH + H(+). It participates in plant hormone biosynthesis; brassinosteroid biosynthesis. Inhibited by the 4-azasteroids 4-MA. In terms of biological role, involved in a reduction step in the biosynthesis of the plant steroid, brassinolide (BL); acts at the second step in brassinolide biosynthesis in the 5alpha-reduction of (24R)- 24-methylcholest-4-en-3-one, which is further modified to form campestanol. Can use progesterone, testosterone, androstenedione and campestenone as substrate. Also catalyzes the conversion of campest-4-en-3-one (campesta-4-en-3-one, 4-en-3-one) to campest-3-one (campesta-3-one, 3-one), of (22S,24R)-22-hydroxyergost-4-en-3-one (22-hydroxy-campesta-4-en-3-one, 22-OH-4-en-3-one) to (22S,24R)-22-hydroxy-5alpha-ergostan-3-one (22-hydroxy-campesta-3-one, 22-OH-3-one), and of (22R,23R)-22,23-dihydroxy-5alpha-campestan-3-one (22,23,diOH-4-en-3-one) to (22R,23R)-22,23-dihydroxycampest-4-en-3-one (6-deoxo3DT). Required for the brassinosteroid- (BR) dependent regulation of seed size and shape as well as embryo development. This chain is Steroid 5-alpha-reductase DET2, found in Arabidopsis thaliana (Mouse-ear cress).